Reading from the N-terminus, the 177-residue chain is Large ribosomal subunit protein uL6 (177 aa).

This sequence belongs to the universal ribosomal protein uL6 family. In terms of assembly, part of the 50S ribosomal subunit.

In terms of biological role, this protein binds to the 23S rRNA, and is important in its secondary structure. It is located near the subunit interface in the base of the L7/L12 stalk, and near the tRNA binding site of the peptidyltransferase center. This chain is Large ribosomal subunit protein uL6, found in Sinorhizobium medicae (strain WSM419) (Ensifer medicae).